Reading from the N-terminus, the 281-residue chain is Glutamate racemase (281 aa).

Substrate is bound by residues 13 to 14 and 45 to 46; these read DS and YG. The active-site Proton donor/acceptor is the cysteine 76. 77–78 lines the substrate pocket; sequence NT. The active-site Proton donor/acceptor is the cysteine 185. A substrate-binding site is contributed by 186–187; that stretch reads TH.

The protein belongs to the aspartate/glutamate racemases family.

It carries out the reaction L-glutamate = D-glutamate. It functions in the pathway cell wall biogenesis; peptidoglycan biosynthesis. Functionally, provides the (R)-glutamate required for cell wall biosynthesis. The protein is Glutamate racemase of Rippkaea orientalis (strain PCC 8801 / RF-1) (Cyanothece sp. (strain PCC 8801)).